We begin with the raw amino-acid sequence, 231 residues long: Sec-independent protein translocase protein TatB (231 aa).

A helical transmembrane segment spans residues 1–21; that stretch reads MFDIGFSELLLFGVIALIVLG. The segment at 77–168 is disordered; it reads MRREMAEMRG…SLKTDFNDNA (92 aa). The span at 101–111 shows a compositional bias: basic and acidic residues; it reads ASRDLVDDAKP. A compositionally biased stretch (polar residues) spans 148-157; the sequence is SEQPSAQGDN.

This sequence belongs to the TatB family. In terms of assembly, the Tat system comprises two distinct complexes: a TatABC complex, containing multiple copies of TatA, TatB and TatC subunits, and a separate TatA complex, containing only TatA subunits. Substrates initially bind to the TatABC complex, which probably triggers association of the separate TatA complex to form the active translocon.

The protein localises to the cell inner membrane. Part of the twin-arginine translocation (Tat) system that transports large folded proteins containing a characteristic twin-arginine motif in their signal peptide across membranes. Together with TatC, TatB is part of a receptor directly interacting with Tat signal peptides. TatB may form an oligomeric binding site that transiently accommodates folded Tat precursor proteins before their translocation. In Psychrobacter cryohalolentis (strain ATCC BAA-1226 / DSM 17306 / VKM B-2378 / K5), this protein is Sec-independent protein translocase protein TatB.